Reading from the N-terminus, the 693-residue chain is Probable L-type lectin-domain containing receptor kinase VI.1 (693 aa).

A signal peptide spans 1-22; that stretch reads MGIARSINSFMFFFFLMILSNA. Asn-21, Asn-44, Asn-71, Asn-89, Asn-141, Asn-180, and Asn-223 each carry an N-linked (GlcNAc...) asparagine glycan. Topologically, residues 23–311 are extracellular; the sequence is SKSSVLAEAT…SNKKGYNSQV (289 aa). The legume-lectin like stretch occupies residues 33 to 279; that stretch reads TAKFTFIGFK…AHYVMGWSFS (247 aa). Residues 312-332 traverse the membrane as a helical segment; the sequence is IVLIVALSIVTLVLLVLLFIF. Residues 333–693 lie on the Cytoplasmic side of the membrane; the sequence is VMYKRRIQEE…VSSSSIVSGR (361 aa). Positions 368-642 constitute a Protein kinase domain; it reads FKESEIIGTG…LRYLNGEENV (275 aa). Residues 374-382 and Lys-396 each bind ATP; that span reads IGTGGFGIV. Residue Asp-495 is the Proton acceptor of the active site. Residues 670–693 form a disordered region; it reads DRASSSNTFSSFSNVSSSSIVSGR.

In the C-terminal section; belongs to the protein kinase superfamily. Ser/Thr protein kinase family. The protein in the N-terminal section; belongs to the leguminous lectin family.

It is found in the cell membrane. The enzyme catalyses L-seryl-[protein] + ATP = O-phospho-L-seryl-[protein] + ADP + H(+). It catalyses the reaction L-threonyl-[protein] + ATP = O-phospho-L-threonyl-[protein] + ADP + H(+). The polypeptide is Probable L-type lectin-domain containing receptor kinase VI.1 (LECRK61) (Arabidopsis thaliana (Mouse-ear cress)).